Here is a 215-residue protein sequence, read N- to C-terminus: Penicillin-binding protein activator LpoB (215 aa).

Positions 1 to 19 (MMKMCRYALITALAIFLAG) are cleaved as a signal peptide. Cys-20 is lipidated: N-palmitoyl cysteine. Cys-20 carries the S-diacylglycerol cysteine lipid modification. Residues 28 to 78 (APVEEAKPQPQQPAQPQPTVPTVPAVPSVPAQPGPIEHQDQQSGQPAPRVR) are disordered. The segment covering 37-48 (PQQPAQPQPTVP) has biased composition (pro residues). Low complexity predominate over residues 49-58 (TVPAVPSVPA).

Belongs to the LpoB family. In terms of assembly, interacts with PBP1b.

Its subcellular location is the cell outer membrane. Its function is as follows. Regulator of peptidoglycan synthesis that is essential for the function of penicillin-binding protein 1B (PBP1b). The sequence is that of Penicillin-binding protein activator LpoB from Klebsiella pneumoniae subsp. pneumoniae (strain ATCC 700721 / MGH 78578).